Consider the following 633-residue polypeptide: Biosynthetic arginine decarboxylase (633 aa).

Residue Lys101 is modified to N6-(pyridoxal phosphate)lysine. 284-294 (VDVGGGLGVDY) is a substrate binding site.

The protein belongs to the Orn/Lys/Arg decarboxylase class-II family. SpeA subfamily. It depends on Mg(2+) as a cofactor. Pyridoxal 5'-phosphate is required as a cofactor.

The catalysed reaction is L-arginine + H(+) = agmatine + CO2. The protein operates within amine and polyamine biosynthesis; agmatine biosynthesis; agmatine from L-arginine: step 1/1. Its function is as follows. Catalyzes the biosynthesis of agmatine from arginine. The sequence is that of Biosynthetic arginine decarboxylase from Aeromonas hydrophila subsp. hydrophila (strain ATCC 7966 / DSM 30187 / BCRC 13018 / CCUG 14551 / JCM 1027 / KCTC 2358 / NCIMB 9240 / NCTC 8049).